A 426-amino-acid polypeptide reads, in one-letter code: Colanic acid biosynthesis protein WcaK (426 aa).

The protein belongs to the polysaccharide pyruvyl transferase family.

Its pathway is slime biogenesis; slime polysaccharide biosynthesis. The chain is Colanic acid biosynthesis protein WcaK (wcaK) from Escherichia coli (strain K12).